We begin with the raw amino-acid sequence, 383 residues long: Succinyl-diaminopimelate desuccinylase (383 aa).

H74 provides a ligand contact to Zn(2+). Residue D76 is part of the active site. D107 lines the Zn(2+) pocket. Residue E141 is the Proton acceptor of the active site. The Zn(2+) site is built by E142, E170, and H356.

It belongs to the peptidase M20A family. DapE subfamily. Homodimer. It depends on Zn(2+) as a cofactor. Co(2+) is required as a cofactor.

It carries out the reaction N-succinyl-(2S,6S)-2,6-diaminopimelate + H2O = (2S,6S)-2,6-diaminopimelate + succinate. The protein operates within amino-acid biosynthesis; L-lysine biosynthesis via DAP pathway; LL-2,6-diaminopimelate from (S)-tetrahydrodipicolinate (succinylase route): step 3/3. Its function is as follows. Catalyzes the hydrolysis of N-succinyl-L,L-diaminopimelic acid (SDAP), forming succinate and LL-2,6-diaminopimelate (DAP), an intermediate involved in the bacterial biosynthesis of lysine and meso-diaminopimelic acid, an essential component of bacterial cell walls. The polypeptide is Succinyl-diaminopimelate desuccinylase (Cupriavidus pinatubonensis (strain JMP 134 / LMG 1197) (Cupriavidus necator (strain JMP 134))).